The sequence spans 151 residues: MKSRRQRAILEIIGAEVVRTQEELAQRLRERGMEVTQATVSRDIKELGLIKVPVSKDESRYAPPAEAAQVPQAQDRLRRLLRDTVTHVDSSLNIVVIRTLPGHAHAVAGAIDHSHWPEVLGTVAGDDTIFIVVKPVEAVEALMDKVRRWVE.

The protein belongs to the ArgR family.

Its subcellular location is the cytoplasm. Its pathway is amino-acid biosynthesis; L-arginine biosynthesis [regulation]. Its function is as follows. Regulates arginine biosynthesis genes. The chain is Arginine repressor from Heliobacterium modesticaldum (strain ATCC 51547 / Ice1).